A 219-amino-acid polypeptide reads, in one-letter code: Probable glutathione S-transferase GSTF1 (219 aa).

In terms of domain architecture, GST N-terminal spans threonine 2 to glutamate 83. Glutathione is bound by residues serine 12, histidine 41–lysine 42, glutamine 54–isoleucine 55, and glutamate 67–serine 68. The region spanning asparagine 91 to alanine 219 is the GST C-terminal domain.

Belongs to the GST superfamily. Phi family. As to expression, constitutively expressed in roots.

It carries out the reaction RX + glutathione = an S-substituted glutathione + a halide anion + H(+). In terms of biological role, conjugation of reduced glutathione to a wide number of exogenous and endogenous hydrophobic electrophiles. This Oryza sativa subsp. japonica (Rice) protein is Probable glutathione S-transferase GSTF1 (GSTF1).